The chain runs to 197 residues: Phospholipid hydroperoxide glutathione peroxidase (197 aa).

The residue at position 40 (Ser-40) is a Phosphoserine. The active site involves Sec-73. A non-standard amino acid (selenocysteine) is located at residue Sec-73.

The protein belongs to the glutathione peroxidase family. In terms of assembly, monomer. Has a tendency to form higher mass oligomers. Interacts with FUNDC1; this interaction promotes GPX4 recruitment into mitochondria through TOM/TIM complex where it is degraded by mitophagy.

It is found in the mitochondrion. It localises to the cytoplasm. It carries out the reaction a hydroperoxy polyunsaturated fatty acid + 2 glutathione = a hydroxy polyunsaturated fatty acid + glutathione disulfide + H2O. The catalysed reaction is 2 glutathione + H2O2 = glutathione disulfide + 2 H2O. The enzyme catalyses tert-butyl hydroperoxide + 2 glutathione = tert-butanol + glutathione disulfide + H2O. It catalyses the reaction cumene hydroperoxide + 2 glutathione = 2-phenylpropan-2-ol + glutathione disulfide + H2O. It carries out the reaction (9S)-hydroperoxy-(10E,12Z)-octadecadienoate + 2 glutathione = (9S)-hydroxy-(10E,12Z)-octadecadienoate + glutathione disulfide + H2O. The catalysed reaction is (13S)-hydroperoxy-(9Z,11E)-octadecadienoate + 2 glutathione = (13S)-hydroxy-(9Z,11E)-octadecadienoate + glutathione disulfide + H2O. The enzyme catalyses (5S)-hydroperoxy-(6E,8Z,11Z,14Z)-eicosatetraenoate + 2 glutathione = (5S)-hydroxy-(6E,8Z,11Z,14Z)-eicosatetraenoate + glutathione disulfide + H2O. It catalyses the reaction (12R)-hydroperoxy-(5Z,8Z,10E,14Z)-eicosatetraenoate + 2 glutathione = (12R)-hydroxy-(5Z,8Z,10E,14Z)-eicosatetraenoate + glutathione disulfide + H2O. It carries out the reaction (12S)-hydroperoxy-(5Z,8Z,10E,14Z)-eicosatetraenoate + 2 glutathione = (12S)-hydroxy-(5Z,8Z,10E,14Z)-eicosatetraenoate + glutathione disulfide + H2O. The catalysed reaction is (15S)-hydroperoxy-(5Z,8Z,11Z,13E)-eicosatetraenoate + 2 glutathione = (15S)-hydroxy-(5Z,8Z,11Z,13E)-eicosatetraenoate + glutathione disulfide + H2O. The enzyme catalyses (5S)-hydroperoxy-(6E,8Z,11Z,14Z,17Z)-eicosapentaenoate + 2 glutathione = (5S)-hydroxy-(6E,8Z,11Z,14Z,17Z)-eicosapentaenoate + glutathione disulfide + H2O. It catalyses the reaction (12S)-hydroperoxy-(5Z,8Z,10E,14Z,17Z)-eicosapentaenoate + 2 glutathione = (12S)-hydroxy-(5Z,8Z,10E,14Z,17Z)-eicosapentaenoate + glutathione disulfide + H2O. It carries out the reaction (15S)-hydroperoxy-(5Z,8Z,11Z,13E,17Z)-eicosapentaenoate + 2 glutathione = (15S)-hydroxy-(5Z,8Z,11Z,13E,17Z)-eicosapentaenoate + glutathione disulfide + H2O. The catalysed reaction is (15S)-hydroperoxy-(11Z,13E)-eicosadienoate + 2 glutathione = (15S)-hydroxy-(11Z,13E)-eicosadienoate + glutathione disulfide + H2O. The enzyme catalyses (17S)-hydroperoxy-(4Z,7Z,10Z,13Z,15E,19Z)-docosahexaenoate + 2 glutathione = (17S)-hydroxy-(4Z,7Z,10Z,13Z,15E,19Z)-docosahexaenoate + glutathione disulfide + H2O. It catalyses the reaction a hydroperoxy-1,2-diacyl-glycero-3-phosphocholine + 2 glutathione = a hydroxy-1,2-diacyl-glycero-3-phosphocholine + glutathione disulfide + H2O. Its function is as follows. Essential antioxidant peroxidase that directly reduces phospholipid hydroperoxide even if they are incorporated in membranes and lipoproteins. Can also reduce fatty acid hydroperoxide, cholesterol hydroperoxide and thymine hydroperoxide. Plays a key role in protecting cells from oxidative damage by preventing membrane lipid peroxidation. Required to prevent cells from ferroptosis, a non-apoptotic cell death resulting from an iron-dependent accumulation of lipid reactive oxygen species. The presence of selenocysteine (Sec) versus Cys at the active site is essential for life: it provides resistance to overoxidation and prevents cells against ferroptosis. The presence of Sec at the active site is also essential for the survival of a specific type of parvalbumin-positive interneurons, thereby preventing against fatal epileptic seizures. May be required to protect cells from the toxicity of ingested lipid hydroperoxides. Required for normal sperm development and male fertility. Essential for maturation and survival of photoreceptor cells. Plays a role in a primary T-cell response to viral and parasitic infection by protecting T-cells from ferroptosis and by supporting T-cell expansion. Plays a role of glutathione peroxidase in platelets in the arachidonic acid metabolism. Reduces hydroperoxy ester lipids formed by a 15-lipoxygenase that may play a role as down-regulator of the cellular 15-lipoxygenase pathway. Can also reduce small soluble hydroperoxides such as H2O2, cumene hydroperoxide and tert-butyl hydroperoxide. The protein is Phospholipid hydroperoxide glutathione peroxidase of Pongo pygmaeus (Bornean orangutan).